The chain runs to 142 residues: Large ribosomal subunit protein uL16 (142 aa).

The protein belongs to the universal ribosomal protein uL16 family. As to quaternary structure, part of the 50S ribosomal subunit.

Functionally, binds 23S rRNA and is also seen to make contacts with the A and possibly P site tRNAs. This chain is Large ribosomal subunit protein uL16, found in Thermosipho africanus (strain TCF52B).